Reading from the N-terminus, the 151-residue chain is 3-dehydroquinate dehydratase (151 aa).

Residue tyrosine 24 is the Proton acceptor of the active site. The substrate site is built by asparagine 76, histidine 82, and aspartate 89. Histidine 102 acts as the Proton donor in catalysis. Residues 103-104 (VS) and arginine 113 each bind substrate.

The protein belongs to the type-II 3-dehydroquinase family. As to quaternary structure, homododecamer.

The enzyme catalyses 3-dehydroquinate = 3-dehydroshikimate + H2O. Its pathway is metabolic intermediate biosynthesis; chorismate biosynthesis; chorismate from D-erythrose 4-phosphate and phosphoenolpyruvate: step 3/7. Catalyzes a trans-dehydration via an enolate intermediate. This Rhodopseudomonas palustris (strain HaA2) protein is 3-dehydroquinate dehydratase.